The following is a 117-amino-acid chain: MTSELPPQIQNQIAQLQQVQQQVQALAMQKSQIEAMQKESKMALEELEKLADDAVVYRNVGELVIKTSKEESVSKLKDREETLSLRLQSISRQEERLTTRFKQLQEQIQQALGPKAQ.

Belongs to the prefoldin subunit beta family. In terms of assembly, heterohexamer of two alpha and four beta subunits.

It is found in the cytoplasm. Functionally, molecular chaperone capable of stabilizing a range of proteins. Seems to fulfill an ATP-independent, HSP70-like function in archaeal de novo protein folding. The chain is Prefoldin subunit beta (pfdB) from Methanosarcina acetivorans (strain ATCC 35395 / DSM 2834 / JCM 12185 / C2A).